Consider the following 255-residue polypeptide: Aliphatic sulfonates import ATP-binding protein SsuB (255 aa).

Residues 12-233 (LLLNAVSKHY…RLGSVRLAEL (222 aa)) enclose the ABC transporter domain. Position 44–51 (44–51 (GRSGGGKS)) interacts with ATP.

This sequence belongs to the ABC transporter superfamily. Aliphatic sulfonates importer (TC 3.A.1.17.2) family. In terms of assembly, the complex is composed of two ATP-binding proteins (SsuB), two transmembrane proteins (SsuC) and a solute-binding protein (SsuA).

It localises to the cell inner membrane. It catalyses the reaction ATP + H2O + aliphatic sulfonate-[sulfonate-binding protein]Side 1 = ADP + phosphate + aliphatic sulfonateSide 2 + [sulfonate-binding protein]Side 1.. Part of the ABC transporter complex SsuABC involved in aliphatic sulfonates import. Responsible for energy coupling to the transport system. The polypeptide is Aliphatic sulfonates import ATP-binding protein SsuB (Escherichia coli (strain K12)).